A 263-amino-acid polypeptide reads, in one-letter code: Fructose-bisphosphate aldolase class 1 (263 aa).

Substrate is bound by residues aspartate 24 to histidine 25, histidine 29, aspartate 33, and tryptophan 144. The active-site Proton donor is tyrosine 146. Substrate contacts are provided by residues arginine 148, lysine 177–lysine 179, serine 202–glycine 204, and glycine 231–arginine 232. The Schiff-base intermediate with dihydroxyacetone-P role is filled by lysine 177.

Belongs to the DeoC/FbaB aldolase family. Homodecamer (dimer of pentamers).

The protein resides in the cytoplasm. It catalyses the reaction beta-D-fructose 1,6-bisphosphate = D-glyceraldehyde 3-phosphate + dihydroxyacetone phosphate. Activated by citrate. Functionally, catalyzes the reversible cleavage of fructose 1,6-bisphosphate (FBP) to glyceraldehyde 3-phosphate (GAP) and dihydroxyacetone phosphate (DHAP). The polypeptide is Fructose-bisphosphate aldolase class 1 (fba) (Thermoproteus tenax (strain ATCC 35583 / DSM 2078 / JCM 9277 / NBRC 100435 / Kra 1)).